The primary structure comprises 286 residues: NH(3)-dependent NAD(+) synthetase (286 aa).

51-58 (GISGGVDS) contacts ATP. Position 57 (aspartate 57) interacts with Mg(2+). Arginine 148 contacts deamido-NAD(+). ATP is bound at residue threonine 168. Glutamate 173 is a Mg(2+) binding site. The deamido-NAD(+) site is built by lysine 181 and aspartate 188. Residues lysine 197 and threonine 219 each coordinate ATP. A deamido-NAD(+)-binding site is contributed by 268–269 (HK).

The protein belongs to the NAD synthetase family. As to quaternary structure, homodimer.

The enzyme catalyses deamido-NAD(+) + NH4(+) + ATP = AMP + diphosphate + NAD(+) + H(+). Its pathway is cofactor biosynthesis; NAD(+) biosynthesis; NAD(+) from deamido-NAD(+) (ammonia route): step 1/1. Functionally, catalyzes the ATP-dependent amidation of deamido-NAD to form NAD. Uses ammonia as a nitrogen source. This chain is NH(3)-dependent NAD(+) synthetase, found in Paraburkholderia phytofirmans (strain DSM 17436 / LMG 22146 / PsJN) (Burkholderia phytofirmans).